The primary structure comprises 155 residues: Small ribosomal subunit protein uS7cz/uS7cy (155 aa).

This sequence belongs to the universal ribosomal protein uS7 family. As to quaternary structure, part of the 30S ribosomal subunit.

It is found in the plastid. It localises to the chloroplast. Functionally, one of the primary rRNA binding proteins, it binds directly to 16S rRNA where it nucleates assembly of the head domain of the 30S subunit. In Chloranthus spicatus (Chulantree), this protein is Small ribosomal subunit protein uS7cz/uS7cy (rps7-A).